Here is a 316-residue protein sequence, read N- to C-terminus: Ribosomal protein L11 methyltransferase (316 aa).

The S-adenosyl-L-methionine site is built by Thr-157, Gly-178, Asp-200, and Asn-243.

Belongs to the methyltransferase superfamily. PrmA family.

The protein localises to the cytoplasm. It carries out the reaction L-lysyl-[protein] + 3 S-adenosyl-L-methionine = N(6),N(6),N(6)-trimethyl-L-lysyl-[protein] + 3 S-adenosyl-L-homocysteine + 3 H(+). Functionally, methylates ribosomal protein L11. The protein is Ribosomal protein L11 methyltransferase of Streptococcus pneumoniae serotype 2 (strain D39 / NCTC 7466).